The following is a 569-amino-acid chain: MFMSSDANACEIDIKPRSRVVTHGIEATTSRGMLRAVGMGDADWEKPQIGIASSWNNITPCNLSLDRLAQGAREGVHAAGGYPLQFCTISVSDGISMGHEGMHFSLVSREVITDSVETVLMAEALDGVVLLAGCDKSLPGMLMAAARLDVSAVFLYAGSIAPGYVTLKCGESKEVTIIDSFEAVGAYKAGLIDQDDLGRIERAICPGEGACGGMYTANTMASVAEALGMSLLGSASPPSADRRRDVYAHKSGEAVVELLKRGITARDILTKEAFENAIAVVMALGGSTNAVLHLLAIAHEAHVPLTIDDFNKIGNRVPHIADLKPFGRYVMNDVDRVGGIPVVINALMREGFIHGDVITVSGRTMAEEISDINPGLPDGKVIHSFSSPLHPTGGIKVLKGTLAPDGAVAKTAGFDTVVFQGPAMVFDRERAAMDALSAGNIKKGSVIVIRYEGPKGGPGMREMLAITAAIKGSGLGKDVLLLTDGRFSGGTTGLCIGHIAPEAVDLGPIAFVQDGDIIRVDIEKSSIDVLVDEKQLRARHLTPPPPRYTSGVLSKYSKLVKSASLGAIT.

C61 serves as a coordination point for [2Fe-2S] cluster. D93 serves as a coordination point for Mg(2+). A [2Fe-2S] cluster-binding site is contributed by C134. Mg(2+)-binding residues include D135 and K136. An N6-carboxylysine modification is found at K136. Residue C211 coordinates [2Fe-2S] cluster. E462 is a binding site for Mg(2+). Catalysis depends on S488, which acts as the Proton acceptor.

Belongs to the IlvD/Edd family. As to quaternary structure, homodimer. Requires [2Fe-2S] cluster as cofactor. Mg(2+) is required as a cofactor.

The enzyme catalyses (2R)-2,3-dihydroxy-3-methylbutanoate = 3-methyl-2-oxobutanoate + H2O. It carries out the reaction (2R,3R)-2,3-dihydroxy-3-methylpentanoate = (S)-3-methyl-2-oxopentanoate + H2O. The protein operates within amino-acid biosynthesis; L-isoleucine biosynthesis; L-isoleucine from 2-oxobutanoate: step 3/4. It functions in the pathway amino-acid biosynthesis; L-valine biosynthesis; L-valine from pyruvate: step 3/4. Its function is as follows. Functions in the biosynthesis of branched-chain amino acids. Catalyzes the dehydration of (2R,3R)-2,3-dihydroxy-3-methylpentanoate (2,3-dihydroxy-3-methylvalerate) into 2-oxo-3-methylpentanoate (2-oxo-3-methylvalerate) and of (2R)-2,3-dihydroxy-3-methylbutanoate (2,3-dihydroxyisovalerate) into 2-oxo-3-methylbutanoate (2-oxoisovalerate), the penultimate precursor to L-isoleucine and L-valine, respectively. The protein is Dihydroxy-acid dehydratase of Tropheryma whipplei (strain TW08/27) (Whipple's bacillus).